The primary structure comprises 410 residues: Peptidase T (410 aa).

His-78 is a Zn(2+) binding site. Asp-80 is a catalytic residue. Position 140 (Asp-140) interacts with Zn(2+). Glu-174 functions as the Proton acceptor in the catalytic mechanism. Zn(2+) is bound by residues Glu-175, Asp-197, and His-379.

This sequence belongs to the peptidase M20B family. Requires Zn(2+) as cofactor.

It is found in the cytoplasm. It catalyses the reaction Release of the N-terminal residue from a tripeptide.. In terms of biological role, cleaves the N-terminal amino acid of tripeptides. This is Peptidase T from Staphylococcus saprophyticus subsp. saprophyticus (strain ATCC 15305 / DSM 20229 / NCIMB 8711 / NCTC 7292 / S-41).